The primary structure comprises 335 residues: Protein-arginine kinase (335 aa).

The Phosphagen kinase C-terminal domain occupies 21 to 244 (IVMSSRIRLA…NQIIHDEKQI (224 aa)). Residues 24-28 (SSRIR), histidine 82, arginine 115, 166-170 (RASVM), and 197-202 (RGIYGE) contribute to the ATP site.

It belongs to the ATP:guanido phosphotransferase family.

It catalyses the reaction L-arginyl-[protein] + ATP = N(omega)-phospho-L-arginyl-[protein] + ADP + H(+). Its function is as follows. Catalyzes the specific phosphorylation of arginine residues in proteins. The protein is Protein-arginine kinase of Staphylococcus aureus (strain Mu3 / ATCC 700698).